The sequence spans 240 residues: Ribonuclease HII (240 aa).

Residues Glu29–Leu220 enclose the RNase H type-2 domain. 3 residues coordinate a divalent metal cation: Asp35, Glu36, and Asp129.

This sequence belongs to the RNase HII family. Mn(2+) serves as cofactor. The cofactor is Mg(2+).

It localises to the cytoplasm. It carries out the reaction Endonucleolytic cleavage to 5'-phosphomonoester.. In terms of biological role, endonuclease that specifically degrades the RNA of RNA-DNA hybrids. The chain is Ribonuclease HII from Nocardioides sp. (strain ATCC BAA-499 / JS614).